The sequence spans 206 residues: Ectodysplasin-A receptor-associated adapter protein (206 aa).

2 disordered regions span residues 1 to 36 (MRPL…DKYP) and 52 to 77 (TLNC…TGDP). Polar residues-rich tracts occupy residues 24-33 (PSTLSFNTSD) and 52-62 (TLNCPPNSDMK). The Death domain maps to 114–190 (DVIRIKLDPC…DVEKVLRRWV (77 aa)).

In terms of assembly, self-associates and binds to EDAR, TRAF1, TRAF2 and TRAF3.

The protein localises to the cytoplasm. Functionally, adapter protein that interacts with EDAR DEATH domain and couples the receptor to EDA signaling pathway during morphogenesis of ectodermal organs. Mediates the activation of NF-kappa-B. This Macaca fascicularis (Crab-eating macaque) protein is Ectodysplasin-A receptor-associated adapter protein (EDARADD).